The chain runs to 684 residues: Phenoloxidase 2 (684 aa).

A propeptide spans 1–51 (MSNTAVLNDLVALYDRPTEPMFRVKAKKSFKVPKEYVTDRFKNVAVEISNR) (removed by PPAF1). Asparagine 81 and asparagine 91 each carry an N-linked (GlcNAc...) asparagine glycan. 3 residues coordinate Cu cation: histidine 209, histidine 213, and histidine 238. Residue asparagine 330 is glycosylated (N-linked (GlcNAc...) asparagine). The active-site Proton acceptor is the glutamate 350. Cu cation contacts are provided by histidine 365, histidine 369, and histidine 405. Residues asparagine 416, asparagine 487, asparagine 491, and asparagine 546 are each glycosylated (N-linked (GlcNAc...) asparagine). 2 disulfide bridges follow: cysteine 581-cysteine 623 and cysteine 583-cysteine 630.

This sequence belongs to the tyrosinase family. In terms of assembly, dimer. Might form a homodimer or a heterodimer with PPO1. Might interact with PPAF2 (via CLIP domain); the interaction might be required for PPO2 activity. Requires Cu(2+) as cofactor. Precursor cleaved by PPAF1. As to expression, hemocytes.

It is found in the secreted. Functionally, this is a copper-containing oxidase that functions in the formation of pigments such as melanins and other polyphenolic compounds. Catalyzes the oxidation of o-diphenols (N-acetyldopamine, 4-methylcatechol and dopamine). Cannot oxidize monophenols and p-phenols (L-tyrosine, tyramine, gentisic acid and hydroquinone). Binds to the surface of hemocytes and is involved in hemocyte melanization. Activation of the enzyme in response to bacterial lipopolysaccharides (LPS) suggests it may play a role in innate immunity. The polypeptide is Phenoloxidase 2 (Holotrichia diomphalia (Korean black chafer)).